We begin with the raw amino-acid sequence, 40 residues long: Large ribosomal subunit protein bL36 (40 aa).

This sequence belongs to the bacterial ribosomal protein bL36 family.

The sequence is that of Large ribosomal subunit protein bL36 from Corynebacterium urealyticum (strain ATCC 43042 / DSM 7109).